The following is a 173-amino-acid chain: Phosphopantetheine adenylyltransferase (173 aa).

Residue Thr-9 coordinates substrate. Residues 9–10 (TF) and His-17 each bind ATP. Residues Lys-41, Thr-75, and Arg-89 each contribute to the substrate site. ATP is bound by residues 90 to 92 (GLR), Glu-100, and 125 to 131 (HIYLSSS).

It belongs to the bacterial CoaD family. In terms of assembly, homohexamer. Mg(2+) is required as a cofactor.

Its subcellular location is the cytoplasm. The enzyme catalyses (R)-4'-phosphopantetheine + ATP + H(+) = 3'-dephospho-CoA + diphosphate. It participates in cofactor biosynthesis; coenzyme A biosynthesis; CoA from (R)-pantothenate: step 4/5. Functionally, reversibly transfers an adenylyl group from ATP to 4'-phosphopantetheine, yielding dephospho-CoA (dPCoA) and pyrophosphate. The chain is Phosphopantetheine adenylyltransferase from Methylacidiphilum infernorum (isolate V4) (Methylokorus infernorum (strain V4)).